We begin with the raw amino-acid sequence, 120 residues long: Large ribosomal subunit protein bL20c (120 aa).

It belongs to the bacterial ribosomal protein bL20 family.

The protein resides in the plastid. Its function is as follows. Binds directly to 23S ribosomal RNA and is necessary for the in vitro assembly process of the 50S ribosomal subunit. It is not involved in the protein synthesizing functions of that subunit. This Cuscuta obtusiflora (Peruvian dodder) protein is Large ribosomal subunit protein bL20c.